Consider the following 323-residue polypeptide: Probable pectate lyase A (323 aa).

Residues 1–20 form the signal peptide; sequence MTNFKWIVAAAGLLSGQVLA. N-linked (GlcNAc...) asparagine glycosylation occurs at N95. Residues D136, D165, and D169 each contribute to the Ca(2+) site. R222 is a catalytic residue.

Belongs to the polysaccharide lyase 1 family. The cofactor is Ca(2+).

Its subcellular location is the secreted. The enzyme catalyses Eliminative cleavage of (1-&gt;4)-alpha-D-galacturonan to give oligosaccharides with 4-deoxy-alpha-D-galact-4-enuronosyl groups at their non-reducing ends.. Functionally, pectinolytic enzyme consist of four classes of enzymes: pectin lyase, polygalacturonase, pectin methylesterase and rhamnogalacturonase. Among pectinolytic enzymes, pectin lyase is the most important in depolymerization of pectin, since it cleaves internal glycosidic bonds of highly methylated pectins. Favors pectate, the anion, over pectin, the methyl ester. This is Probable pectate lyase A (plyA) from Aspergillus niger (strain ATCC MYA-4892 / CBS 513.88 / FGSC A1513).